The chain runs to 394 residues: Guanine nucleotide-binding protein G(s) subunit alpha (394 aa).

Residues 1-23 (MGCLGNSKTEDQRNEEKAQREAN) are disordered. Gly-2 carries N-palmitoyl glycine lipidation. Cys-3 is lipidated: S-palmitoyl cysteine. Over residues 8 to 23 (KTEDQRNEEKAQREAN) the composition is skewed to basic and acidic residues. The region spanning 39 to 394 (ATHRLLLLGA…RMHLRQYELL (356 aa)) is the G-alpha domain. The segment at 42–55 (RLLLLGAGESGKST) is G1 motif. A GTP-binding site is contributed by 47–55 (GAGESGKST). Ser-54 lines the Mg(2+) pocket. The disordered stretch occupies residues 68–91 (FNGEGGEEDPQAARSNSDGEKATK). The tract at residues 196 to 204 (DLLRCRVLT) is G2 motif. GTP is bound by residues 197–204 (LLRCRVLT), 223–227 (DVGGQ), 292–295 (NKQD), and Ala-366. Mg(2+) is bound at residue Thr-204. A G3 motif region spans residues 219–228 (FHMFDVGGQR). The interval 288 to 295 (ILFLNKQD) is G4 motif. Residues 364–369 (TCAVDT) are G5 motif.

Belongs to the G-alpha family. G(s) subfamily. In terms of assembly, heterotrimeric G proteins are composed of 3 units; alpha, beta and gamma. The alpha chain contains the guanine nucleotide binding site. Interacts with CRY1; the interaction may block GPCR-mediated regulation of cAMP concentrations. Interacts with ADCY6 and stimulates its adenylyl cyclase activity. Interacts with ADCY2 and ADCY5. Stimulates the ADCY5 adenylyl cyclase activity. Interaction with SASH1.

It localises to the cell membrane. Functionally, guanine nucleotide-binding proteins (G proteins) function as transducers in numerous signaling pathways controlled by G protein-coupled receptors (GPCRs). Signaling involves the activation of adenylyl cyclases, resulting in increased levels of the signaling molecule cAMP. GNAS functions downstream of several GPCRs, including beta-adrenergic receptors. Stimulates the Ras signaling pathway via RAPGEF2. The protein is Guanine nucleotide-binding protein G(s) subunit alpha (GNAS) of Canis lupus familiaris (Dog).